We begin with the raw amino-acid sequence, 296 residues long: NAD kinase (296 aa).

D74 acts as the Proton acceptor in catalysis. NAD(+)-binding positions include 74–75 (DG), 148–149 (ND), R176, D178, and 189–194 (TAYALS).

Belongs to the NAD kinase family. A divalent metal cation serves as cofactor.

It localises to the cytoplasm. It catalyses the reaction NAD(+) + ATP = ADP + NADP(+) + H(+). Functionally, involved in the regulation of the intracellular balance of NAD and NADP, and is a key enzyme in the biosynthesis of NADP. Catalyzes specifically the phosphorylation on 2'-hydroxyl of the adenosine moiety of NAD to yield NADP. This chain is NAD kinase, found in Nitrosomonas europaea (strain ATCC 19718 / CIP 103999 / KCTC 2705 / NBRC 14298).